The chain runs to 104 residues: Putative arsenate reductase (104 aa).

C12 is a catalytic residue.

The protein belongs to the ArsC family.

It carries out the reaction [glutaredoxin]-dithiol + arsenate + glutathione + H(+) = glutathionyl-S-S-[glutaredoxin] + arsenite + H2O. In terms of biological role, reduction of arsenate [As(V)] to arsenite [As(III)]. This protein expands the substrate specificity of ArsAB pump which can extrude arsenite and antimonite to allow for arsenate pumping and resistance. This is Putative arsenate reductase (yfjU) from Escherichia coli (strain K12).